The chain runs to 118 residues: NADH-ubiquinone oxidoreductase chain 3 (118 aa).

The next 3 membrane-spanning stretches (helical) occupy residues 5 to 25 (YIYI…LIFL), 62 to 82 (LIAI…PWSI), and 87 to 107 (GSFF…VGFI).

This sequence belongs to the complex I subunit 3 family.

It is found in the mitochondrion membrane. The enzyme catalyses a ubiquinone + NADH + 5 H(+)(in) = a ubiquinol + NAD(+) + 4 H(+)(out). In terms of biological role, core subunit of the mitochondrial membrane respiratory chain NADH dehydrogenase (Complex I) that is believed to belong to the minimal assembly required for catalysis. Complex I functions in the transfer of electrons from NADH to the respiratory chain. The immediate electron acceptor for the enzyme is believed to be ubiquinone. The sequence is that of NADH-ubiquinone oxidoreductase chain 3 (ND3) from Acanthamoeba castellanii (Amoeba).